The primary structure comprises 327 residues: MKTQTKVMGGHVLLTVFTLCMLCSAVRAQLSPDIYAKSCPNLLQIVRDQVKIALKAEIRMAASLIRLHFHDCFVNGCDASVLLDGTNSEKLAIPNVNSVRGFEVIDTIKAAVENACPGVVSCADILTLAARDSVYLSGGPQWRVALGRKDGLVANQSSANNLPSPFEPLDAIIAKFAAVGLNVTDVVALSGAHTFGQAKCDLFSNRLFNFTGAGTPDSTLETTLLSDLQTVCPIGGNGNKTAPLDRNSTDAFDNNYFKNLLEGKGLLSSDQILFSSDLAVNTTKRLVEAYSRSQYLFFRDFTCSMIRMGSLVNGASGEVRTNCRVIN.

An N-terminal signal peptide occupies residues 1 to 28 (MKTQTKVMGGHVLLTVFTLCMLCSAVRA). Residue Gln29 is modified to Pyrrolidone carboxylic acid. Intrachain disulfides connect Cys39–Cys116, Cys72–Cys77, Cys122–Cys323, and Cys200–Cys232. His70 serves as the catalytic Proton acceptor. The Ca(2+) site is built by Asp71, Val74, Gly76, Asp78, and Ser80. N-linked (GlcNAc...) asparagine glycosylation is present at Asn155. Pro163 provides a ligand contact to substrate. Asn182 carries N-linked (GlcNAc...) asparagine glycosylation. Residue His193 participates in heme b binding. Ca(2+) is bound at residue Thr194. 2 N-linked (GlcNAc...) asparagine glycosylation sites follow: Asn209 and Asn239. Asp245 contributes to the Ca(2+) binding site. N-linked (GlcNAc...) asparagine glycosylation is present at Asn247. Ca(2+) is bound by residues Ser248 and Asp253. A glycan (N-linked (GlcNAc...) asparagine) is linked at Asn281.

Belongs to the peroxidase family. Classical plant (class III) peroxidase subfamily. Requires Ca(2+) as cofactor. Heme b is required as a cofactor.

It is found in the secreted. The catalysed reaction is 2 a phenolic donor + H2O2 = 2 a phenolic radical donor + 2 H2O. Its function is as follows. Removal of H(2)O(2), oxidation of toxic reductants, biosynthesis and degradation of lignin, suberization, auxin catabolism, response to environmental stresses such as wounding, pathogen attack and oxidative stress. These functions might be dependent on each isozyme/isoform in each plant tissue. This is Peroxidase N (HRPN) from Armoracia rusticana (Horseradish).